Consider the following 617-residue polypeptide: Leucine aminopeptidase 2 (617 aa).

A peptide contacts are provided by residues 139–141 (QCQ) and 271–276 (PYGGME). His300 serves as a coordination point for Zn(2+). Glu301 serves as the catalytic Proton acceptor. His304 and Glu323 together coordinate Zn(2+). Tyr388 functions as the Proton donor in the catalytic mechanism.

It belongs to the peptidase M1 family. Requires Zn(2+) as cofactor.

The protein localises to the cytoplasm. It localises to the nucleus. The catalysed reaction is an epoxide + H2O = an ethanediol. Its function is as follows. Aminopeptidase that preferentially cleaves di- and tripeptides. Also has low epoxide hydrolase activity (in vitro). Can hydrolyze the epoxide leukotriene LTA(4) but it forms preferentially 5,6-dihydroxy-7,9,11,14-eicosatetraenoic acid rather than the cytokine leukotriene B(4) as the product compared to the homologous mammalian enzyme (in vitro). This chain is Leucine aminopeptidase 2, found in Neosartorya fischeri (strain ATCC 1020 / DSM 3700 / CBS 544.65 / FGSC A1164 / JCM 1740 / NRRL 181 / WB 181) (Aspergillus fischerianus).